The chain runs to 502 residues: MSSLNTRARAVFSAAVEGVHPDMVVRRGLERHGDKLHVGGQSFTLTNNLYLVGFGKAVLGMAAEAERIVGDHLIKGVVSVPHGIQNTLRSHGKEKMLLESNSRITVMEGAKHNLPDTDAQKSAECIRDLASSLTEKDLLLVLISGGGSALLPAPAPPMSLQEKQDVTRKLAAAGATIQELNTVRRALSLLKGGGLAQCASPAKVVALILSDVIGDPLDLIASGPTVRSDSSPEEVWAILDNYKLSDSLPSSVKEVLSKSISGQGSGVKNQPQEVKDNVLNVVIGSNTIALECASRKASELGLRPVILSPGVCGDVRSVARLYGLLSSFACSPGKEPPPELAAEILKLGPEVGIESWDLCRTMNVLVGERKEGWGATCLLAGGEPTVKLSGKGRGGRNQELAMRVGLELSQGEVKSGAVFLSGGTDGQDGPTEAAGAVADGELKEEAASQGLDTDSFLANNDSFTFFSKLSEGRRLLNPGLTGTNVMDVHVMLLPPSPQKDLQ.

Belongs to the glycerate kinase type-2 family.

The protein resides in the cytoplasm. It carries out the reaction (R)-glycerate + ATP = (2R)-3-phosphoglycerate + ADP + H(+). The chain is Glycerate kinase (glyctk) from Danio rerio (Zebrafish).